A 752-amino-acid polypeptide reads, in one-letter code: Photosystem I P700 chlorophyll a apoprotein A1 (752 aa).

Transmembrane regions (helical) follow at residues 73-96, 159-182, 198-222, 294-312, 349-372, 388-414, 436-458, and 533-551; these read IFSAHFGQLAIIFLWVSQAYFHGA, LYWTAMGGLMMSALMVFAGWFHYH, MNHHLAGLLGLGCLSWSGHQIHISL, TAHHHLALAVLFIFAGHMY, WHAQLAINLAMMGSLSIIVAHHMY, LSLFTHHMWIGGFCVCGAAAHGAIFMV, AIISHLNWVCIFLGTHSFGLYIH, and FLVHHIHAFTIHVTVLILL. Positions 575 and 584 each coordinate [4Fe-4S] cluster. A run of 2 helical transmembrane segments spans residues 591-612 and 666-688; these read HIFLGLFWMYNCISVVIFHFSW and LSAYGIIFLGAHFIWAFSLMFLF. Histidine 677 serves as a coordination point for chlorophyll a'. Chlorophyll a contacts are provided by methionine 685 and tyrosine 693. Residue tryptophan 694 coordinates phylloquinone. Residues 726–746 traverse the membrane as a helical segment; that stretch reads AVGLAHYLLGGIGTTWSFFLA.

This sequence belongs to the PsaA/PsaB family. In terms of assembly, the PsaA/B heterodimer binds the P700 chlorophyll special pair and subsequent electron acceptors. PSI consists of a core antenna complex that captures photons, and an electron transfer chain that converts photonic excitation into a charge separation. The eukaryotic PSI reaction center is composed of at least 11 subunits. P700 is a chlorophyll a/chlorophyll a' dimer, A0 is one or more chlorophyll a, A1 is one or both phylloquinones and FX is a shared 4Fe-4S iron-sulfur center. serves as cofactor.

It localises to the plastid. It is found in the chloroplast thylakoid membrane. The catalysed reaction is reduced [plastocyanin] + hnu + oxidized [2Fe-2S]-[ferredoxin] = oxidized [plastocyanin] + reduced [2Fe-2S]-[ferredoxin]. Its function is as follows. PsaA and PsaB bind P700, the primary electron donor of photosystem I (PSI), as well as the electron acceptors A0, A1 and FX. PSI is a plastocyanin/cytochrome c6-ferredoxin oxidoreductase, converting photonic excitation into a charge separation, which transfers an electron from the donor P700 chlorophyll pair to the spectroscopically characterized acceptors A0, A1, FX, FA and FB in turn. Oxidized P700 is reduced on the lumenal side of the thylakoid membrane by plastocyanin or cytochrome c6. The sequence is that of Photosystem I P700 chlorophyll a apoprotein A1 from Emiliania huxleyi (Coccolithophore).